Reading from the N-terminus, the 76-residue chain is Conotoxin Cal5a L1 (76 aa).

The N-terminal stretch at 1 to 22 is a signal peptide; it reads MRFYIGLMAALMLTSILRTDSA. Residues 23 to 42 constitute a propeptide that is removed on maturation; that stretch reads SVDQTGAEGGLALIERVIRQ. At P50 the chain carries 4-hydroxyproline. P58 carries the post-translational modification 4-hydroxyproline; in form cal5a, and form cal5b. Position 62 is a 4-hydroxyproline; in form cal5a, form cal5b, and form cal5c (P62). P64 bears the 4-hydroxyproline; in form cal5a, form cal5b, form cal5c, and form cal5d mark.

Post-translationally, contains 2 disulfide bonds that can be either 'C1-C3, C2-C4' or 'C1-C4, C2-C3', since these disulfide connectivities have been observed for conotoxins with cysteine framework V (for examples, see AC P0DQQ7 and AC P81755). In terms of processing, five different peptides have been described after total venom examination by HPLC-MS. Cal5a is the longest. Cal5b-Cal5e are identical in length but are differentially hydroxylated. It is possible that hydroxylation and proteolysis at position 53 are incomplete in some of these peptides. As to expression, expressed by the venom duct.

It is found in the secreted. Functionally, probable neurotoxin with unknown target. Possibly targets ion channels. In Californiconus californicus (California cone), this protein is Conotoxin Cal5a L1.